Consider the following 336-residue polypeptide: Glycerol-3-phosphate dehydrogenase [NAD(P)+] (336 aa).

NADPH is bound by residues S11, W12, R33, R34, and K107. K107 and G137 together coordinate sn-glycerol 3-phosphate. Residue A141 coordinates NADPH. Residues K192, D245, S255, R256, and N257 each coordinate sn-glycerol 3-phosphate. The active-site Proton acceptor is K192. R256 lines the NADPH pocket. Position 282 (E282) interacts with NADPH.

It belongs to the NAD-dependent glycerol-3-phosphate dehydrogenase family.

It is found in the cytoplasm. It carries out the reaction sn-glycerol 3-phosphate + NAD(+) = dihydroxyacetone phosphate + NADH + H(+). It catalyses the reaction sn-glycerol 3-phosphate + NADP(+) = dihydroxyacetone phosphate + NADPH + H(+). It functions in the pathway membrane lipid metabolism; glycerophospholipid metabolism. Catalyzes the reduction of the glycolytic intermediate dihydroxyacetone phosphate (DHAP) to sn-glycerol 3-phosphate (G3P), the key precursor for phospholipid synthesis. The chain is Glycerol-3-phosphate dehydrogenase [NAD(P)+] from Thermobifida fusca (strain YX).